We begin with the raw amino-acid sequence, 307 residues long: Nicotinamide/nicotinic acid mononucleotide adenylyltransferase 2 (307 aa).

NAD(+) is bound by residues serine 16 and phenylalanine 17. ATP is bound at residue histidine 24. Tryptophan 92 and threonine 95 together coordinate NAD(+). S-palmitoyl cysteine attachment occurs at residues cysteine 164 and cysteine 165. Residues glycine 200, aspartate 202, leucine 212, tryptophan 213, and arginine 232 each contribute to the NAD(+) site. 271–274 (TKSR) contacts ATP.

The protein belongs to the eukaryotic NMN adenylyltransferase family. In terms of assembly, monomer. Mg(2+) serves as cofactor. In terms of processing, degraded in response to injured neurite. Degradation is caused by polyubiquitination by MYCBP2 after recognition by FBXO45. Post-translationally, palmitoylated; palmitoylation is required for membrane association.

The protein localises to the golgi apparatus membrane. The protein resides in the cytoplasmic vesicle membrane. It localises to the cytoplasm. Its subcellular location is the cell projection. It is found in the axon. The catalysed reaction is beta-nicotinamide D-ribonucleotide + ATP + H(+) = diphosphate + NAD(+). The enzyme catalyses nicotinate beta-D-ribonucleotide + ATP + H(+) = deamido-NAD(+) + diphosphate. It functions in the pathway cofactor biosynthesis; NAD(+) biosynthesis; NAD(+) from nicotinamide D-ribonucleotide: step 1/1. The protein operates within cofactor biosynthesis; NAD(+) biosynthesis; deamido-NAD(+) from nicotinate D-ribonucleotide: step 1/1. With respect to regulation, inhibited by P1-(adenosine-5')-P3-(nicotinamide-riboside-5')-triphosphate (Np3AD) and P1-(adenosine-5')-P4-(nicotinamide-riboside-5')-tetraphosphate (Np4AD). Its function is as follows. Nicotinamide/nicotinate-nucleotide adenylyltransferase that acts as an axon maintenance factor. Axon survival factor required for the maintenance of healthy axons: acts by delaying Wallerian axon degeneration, an evolutionarily conserved process that drives the loss of damaged axons. Catalyzes the formation of NAD(+) from nicotinamide mononucleotide (NMN) and ATP. Can also use the deamidated form; nicotinic acid mononucleotide (NaMN) as substrate but with a lower efficiency. Cannot use triazofurin monophosphate (TrMP) as substrate. Also catalyzes the reverse reaction, i.e. the pyrophosphorolytic cleavage of NAD(+). For the pyrophosphorolytic activity prefers NAD(+), NADH and NaAD as substrates and degrades nicotinic acid adenine dinucleotide phosphate (NHD) less effectively. Fails to cleave phosphorylated dinucleotides NADP(+), NADPH and NaADP(+). Also acts as an activator of ADP-ribosylation by supporting the catalytic activity of PARP16 and promoting mono-ADP-ribosylation of ribosomes by PARP16. May be involved in the maintenance of axonal integrity. This is Nicotinamide/nicotinic acid mononucleotide adenylyltransferase 2 (NMNAT2) from Pongo abelii (Sumatran orangutan).